The chain runs to 147 residues: Ubiquitin-conjugating enzyme E2-16 kDa (147 aa).

Residues 1 to 147 form the UBC core domain; that stretch reads MAFKRINKEL…AREWTRKYAI (147 aa). Cys107 serves as the catalytic Glycyl thioester intermediate.

Belongs to the ubiquitin-conjugating enzyme family.

It catalyses the reaction S-ubiquitinyl-[E1 ubiquitin-activating enzyme]-L-cysteine + [E2 ubiquitin-conjugating enzyme]-L-cysteine = [E1 ubiquitin-activating enzyme]-L-cysteine + S-ubiquitinyl-[E2 ubiquitin-conjugating enzyme]-L-cysteine.. It functions in the pathway protein modification; protein ubiquitination. Catalyzes the covalent attachment of ubiquitin to other proteins. May also mediate selective proteolysis pathways. This chain is Ubiquitin-conjugating enzyme E2-16 kDa (UBC1), found in Colletotrichum gloeosporioides (Anthracnose fungus).